A 715-amino-acid polypeptide reads, in one-letter code: Elongation factor G (715 aa).

The region spanning 12–309 is the tr-type G domain; it reads RRVRNIGIMA…GVIDYLPSPL (298 aa). Residues 21 to 28, 108 to 112, and 162 to 165 each bind GTP; these read AHIDAGKT, DTPGH, and NKMD.

This sequence belongs to the TRAFAC class translation factor GTPase superfamily. Classic translation factor GTPase family. EF-G/EF-2 subfamily.

The protein resides in the cytoplasm. Its function is as follows. Catalyzes the GTP-dependent ribosomal translocation step during translation elongation. During this step, the ribosome changes from the pre-translocational (PRE) to the post-translocational (POST) state as the newly formed A-site-bound peptidyl-tRNA and P-site-bound deacylated tRNA move to the P and E sites, respectively. Catalyzes the coordinated movement of the two tRNA molecules, the mRNA and conformational changes in the ribosome. The sequence is that of Elongation factor G from Rubrobacter xylanophilus (strain DSM 9941 / JCM 11954 / NBRC 16129 / PRD-1).